The following is a 381-amino-acid chain: 3-isopropylmalate dehydrogenase (381 aa).

Substrate contacts are provided by Arg-104, Arg-114, Arg-142, and Asp-232. Residues Asp-232, Asp-256, and Asp-260 each coordinate Mg(2+). 290–302 serves as a coordination point for NAD(+); sequence GSAPDIAGQDKAN.

The protein belongs to the isocitrate and isopropylmalate dehydrogenases family. LeuB type 1 subfamily. In terms of assembly, homodimer. Requires Mg(2+) as cofactor. It depends on Mn(2+) as a cofactor.

Its subcellular location is the cytoplasm. The catalysed reaction is (2R,3S)-3-isopropylmalate + NAD(+) = 4-methyl-2-oxopentanoate + CO2 + NADH. It functions in the pathway amino-acid biosynthesis; L-leucine biosynthesis; L-leucine from 3-methyl-2-oxobutanoate: step 3/4. Catalyzes the oxidation of 3-carboxy-2-hydroxy-4-methylpentanoate (3-isopropylmalate) to 3-carboxy-4-methyl-2-oxopentanoate. The product decarboxylates to 4-methyl-2 oxopentanoate. The sequence is that of 3-isopropylmalate dehydrogenase from Synechococcus sp. (strain JA-3-3Ab) (Cyanobacteria bacterium Yellowstone A-Prime).